Consider the following 314-residue polypeptide: Ribosomal protein uL3 glutamine methyltransferase (314 aa).

The protein belongs to the protein N5-glutamine methyltransferase family. PrmB subfamily.

The catalysed reaction is L-glutaminyl-[ribosomal protein uL3] + S-adenosyl-L-methionine = N(5)-methyl-L-glutaminyl-[ribosomal protein uL3] + S-adenosyl-L-homocysteine + H(+). In terms of biological role, methylates large ribosomal subunit protein uL3 on a specific glutamine residue. This is Ribosomal protein uL3 glutamine methyltransferase from Vibrio cholerae serotype O1 (strain ATCC 39315 / El Tor Inaba N16961).